A 681-amino-acid chain; its full sequence is Peroxisomal acyl-coenzyme A oxidase 2 (681 aa).

A phosphoserine mark is found at S3 and S9. The residue at position 13 (T13) is a Phosphothreonine. An N6-succinyllysine mark is found at K66, K137, K453, and K561. A Microbody targeting signal motif is present at residues S679 to L681.

It belongs to the acyl-CoA oxidase family. In terms of assembly, homodimer. It depends on FAD as a cofactor. In terms of tissue distribution, present in all tissues tested: heart, brain, placenta, lung, liver, skeletal muscle, kidney and pancreas. Most abundant in heart, liver and kidney.

The protein localises to the peroxisome. It catalyses the reaction (25R)-3alpha,7alpha,12alpha-trihydroxy-5beta-cholestan-26-oyl-CoA + A + H2O = (24R,25R)-3alpha,7alpha,12alpha,24-tetrahydroxy-5beta-cholestan-26-oyl-CoA + AH2. It carries out the reaction (25S)-3alpha,7alpha,12alpha-trihydroxy-5beta-cholestan-26-oyl-CoA + O2 = (24E)-3alpha,7alpha,12alpha-trihydroxy-5beta-cholest-24-en-26-oyl-CoA + H2O2. Oxidizes the CoA esters of the bile acid intermediates di- and tri-hydroxycholestanoic acids. Capable of oxidizing short as well as long chain 2-methyl branched fatty acids. The protein is Peroxisomal acyl-coenzyme A oxidase 2 of Homo sapiens (Human).